A 254-amino-acid polypeptide reads, in one-letter code: Ribosomal RNA small subunit methyltransferase J (254 aa).

Residues 107–108, 123–124, and aspartate 174 contribute to the S-adenosyl-L-methionine site; these read RD and ER.

Belongs to the methyltransferase superfamily. RsmJ family.

Its subcellular location is the cytoplasm. The enzyme catalyses guanosine(1516) in 16S rRNA + S-adenosyl-L-methionine = N(2)-methylguanosine(1516) in 16S rRNA + S-adenosyl-L-homocysteine + H(+). In terms of biological role, specifically methylates the guanosine in position 1516 of 16S rRNA. This Coxiella burnetii (strain Dugway 5J108-111) protein is Ribosomal RNA small subunit methyltransferase J.